The following is a 210-amino-acid chain: Orotate phosphoribosyltransferase (210 aa).

Residues R94, K98, H100, and 120–128 each bind 5-phospho-alpha-D-ribose 1-diphosphate; that span reads EDLISTGGS. Residue S124 coordinates orotate.

It belongs to the purine/pyrimidine phosphoribosyltransferase family. PyrE subfamily. Homodimer. Mg(2+) serves as cofactor.

It carries out the reaction orotidine 5'-phosphate + diphosphate = orotate + 5-phospho-alpha-D-ribose 1-diphosphate. The protein operates within pyrimidine metabolism; UMP biosynthesis via de novo pathway; UMP from orotate: step 1/2. Catalyzes the transfer of a ribosyl phosphate group from 5-phosphoribose 1-diphosphate to orotate, leading to the formation of orotidine monophosphate (OMP). The polypeptide is Orotate phosphoribosyltransferase (Bacillus cereus (strain ATCC 10987 / NRS 248)).